The chain runs to 140 residues: Putative pre-16S rRNA nuclease (140 aa).

Belongs to the YqgF nuclease family.

It is found in the cytoplasm. Functionally, could be a nuclease involved in processing of the 5'-end of pre-16S rRNA. This Lachnospira eligens (strain ATCC 27750 / DSM 3376 / VPI C15-48 / C15-B4) (Eubacterium eligens) protein is Putative pre-16S rRNA nuclease.